A 139-amino-acid chain; its full sequence is D-ribose pyranase (139 aa).

Catalysis depends on His20, which acts as the Proton donor. Substrate-binding positions include Asp28, His106, and 128-130 (YAN).

It belongs to the RbsD / FucU family. RbsD subfamily. As to quaternary structure, homodecamer.

The protein resides in the cytoplasm. It catalyses the reaction beta-D-ribopyranose = beta-D-ribofuranose. Its pathway is carbohydrate metabolism; D-ribose degradation; D-ribose 5-phosphate from beta-D-ribopyranose: step 1/2. Catalyzes the interconversion of beta-pyran and beta-furan forms of D-ribose. In Enterobacter sp. (strain 638), this protein is D-ribose pyranase.